We begin with the raw amino-acid sequence, 121 residues long: Glycine cleavage system H protein (121 aa).

The Lipoyl-binding domain occupies 22–102; it reads IAWVGITKYA…DSSVWLFKAE (81 aa). Lys63 is modified (N6-lipoyllysine).

This sequence belongs to the GcvH family. In terms of assembly, the glycine cleavage system is composed of four proteins: P, T, L and H. (R)-lipoate is required as a cofactor.

The glycine cleavage system catalyzes the degradation of glycine. The H protein shuttles the methylamine group of glycine from the P protein to the T protein. This is Glycine cleavage system H protein from Tropheryma whipplei (strain TW08/27) (Whipple's bacillus).